Consider the following 667-residue polypeptide: DNA ligase (667 aa).

NAD(+) is bound by residues 32–36, 81–82, and Glu-110; these read DSEYD and SL. The active-site N6-AMP-lysine intermediate is the Lys-112. Arg-133, Glu-167, Lys-283, and Lys-307 together coordinate NAD(+). Zn(2+) is bound by residues Cys-401, Cys-404, Cys-419, and Cys-424. Residues 586 to 667 form the BRCT domain; that stretch reads EGHPEFSGKT…FVDKQNELNS (82 aa).

The protein belongs to the NAD-dependent DNA ligase family. LigA subfamily. It depends on Mg(2+) as a cofactor. Mn(2+) serves as cofactor.

It carries out the reaction NAD(+) + (deoxyribonucleotide)n-3'-hydroxyl + 5'-phospho-(deoxyribonucleotide)m = (deoxyribonucleotide)n+m + AMP + beta-nicotinamide D-nucleotide.. In terms of biological role, DNA ligase that catalyzes the formation of phosphodiester linkages between 5'-phosphoryl and 3'-hydroxyl groups in double-stranded DNA using NAD as a coenzyme and as the energy source for the reaction. It is essential for DNA replication and repair of damaged DNA. The chain is DNA ligase from Staphylococcus aureus (strain USA300).